A 266-amino-acid polypeptide reads, in one-letter code: Translation initiation factor 2 subunit alpha (266 aa).

In terms of domain architecture, S1 motif spans 12–83; the sequence is GEILIATVKQ…RKGTVDVSLK (72 aa).

This sequence belongs to the eIF-2-alpha family. Heterotrimer composed of an alpha, a beta and a gamma chain.

Functionally, eIF-2 functions in the early steps of protein synthesis by forming a ternary complex with GTP and initiator tRNA. The protein is Translation initiation factor 2 subunit alpha of Saccharolobus islandicus (strain L.S.2.15 / Lassen #1) (Sulfolobus islandicus).